The sequence spans 418 residues: 1-acylglycerol-3-phosphate O-acyltransferase (418 aa).

The 131-residue stretch at 121-251 (PTLVMVHGYG…RATWKGAVLN (131 aa)) folds into the AB hydrolase-1 domain. A GXSXG motif is present at residues 197-201 (GHSFG). Residues 379-384 (HFVFID) carry the HXXXXD motif motif.

This sequence belongs to the peptidase S33 family. ABHD4/ABHD5 subfamily.

Its subcellular location is the cytoplasm. It catalyses the reaction a 1-acyl-sn-glycero-3-phosphate + an acyl-CoA = a 1,2-diacyl-sn-glycero-3-phosphate + CoA. In terms of biological role, lysophosphatidic acid acyltransferase which functions in phosphatidic acid biosynthesis. Is highly specific for lysophosphatidic acid and able to use different acyl-CoA donors. May regulate neutral lipid accumulation and participate in the regulation of lipid turnover in vegetative cells. Possesses additional triacylglycerol lipase and phospholipase A2 activities in vitro. Is not active as esterase or lysophospholipase. The chain is 1-acylglycerol-3-phosphate O-acyltransferase from Arabidopsis thaliana (Mouse-ear cress).